We begin with the raw amino-acid sequence, 310 residues long: Methionyl-tRNA formyltransferase (310 aa).

109-112 contributes to the (6S)-5,6,7,8-tetrahydrofolate binding site; that stretch reads SLLP.

The protein belongs to the Fmt family.

It catalyses the reaction L-methionyl-tRNA(fMet) + (6R)-10-formyltetrahydrofolate = N-formyl-L-methionyl-tRNA(fMet) + (6S)-5,6,7,8-tetrahydrofolate + H(+). In terms of biological role, attaches a formyl group to the free amino group of methionyl-tRNA(fMet). The formyl group appears to play a dual role in the initiator identity of N-formylmethionyl-tRNA by promoting its recognition by IF2 and preventing the misappropriation of this tRNA by the elongation apparatus. The sequence is that of Methionyl-tRNA formyltransferase from Pseudomonas paraeruginosa (strain DSM 24068 / PA7) (Pseudomonas aeruginosa (strain PA7)).